Consider the following 348-residue polypeptide: Probable dual-specificity RNA methyltransferase RlmN (348 aa).

The Proton acceptor role is filled by glutamate 93. Residues 99-323 enclose the Radical SAM core domain; the sequence is TEKRLTACLS…QTRLSNSGIN (225 aa). A disulfide bridge connects residues cysteine 106 and cysteine 338. [4Fe-4S] cluster contacts are provided by cysteine 113, cysteine 117, and cysteine 120. Residues 160–161, serine 190, 219–221, and asparagine 295 each bind S-adenosyl-L-methionine; these read GE and SLH. The S-methylcysteine intermediate role is filled by cysteine 338.

Belongs to the radical SAM superfamily. RlmN family. [4Fe-4S] cluster serves as cofactor.

It localises to the cytoplasm. It carries out the reaction adenosine(2503) in 23S rRNA + 2 reduced [2Fe-2S]-[ferredoxin] + 2 S-adenosyl-L-methionine = 2-methyladenosine(2503) in 23S rRNA + 5'-deoxyadenosine + L-methionine + 2 oxidized [2Fe-2S]-[ferredoxin] + S-adenosyl-L-homocysteine. The catalysed reaction is adenosine(37) in tRNA + 2 reduced [2Fe-2S]-[ferredoxin] + 2 S-adenosyl-L-methionine = 2-methyladenosine(37) in tRNA + 5'-deoxyadenosine + L-methionine + 2 oxidized [2Fe-2S]-[ferredoxin] + S-adenosyl-L-homocysteine. Specifically methylates position 2 of adenine 2503 in 23S rRNA and position 2 of adenine 37 in tRNAs. This Prochlorococcus marinus subsp. pastoris (strain CCMP1986 / NIES-2087 / MED4) protein is Probable dual-specificity RNA methyltransferase RlmN.